The primary structure comprises 440 residues: Trigger factor (440 aa).

One can recognise a PPIase FKBP-type domain in the interval 176 to 261; it reads GDKVVIDYQN…VKSIYVVKDV (86 aa).

It belongs to the FKBP-type PPIase family. Tig subfamily.

Its subcellular location is the cytoplasm. The catalysed reaction is [protein]-peptidylproline (omega=180) = [protein]-peptidylproline (omega=0). Its function is as follows. Involved in protein export. Acts as a chaperone by maintaining the newly synthesized protein in an open conformation. Functions as a peptidyl-prolyl cis-trans isomerase. The sequence is that of Trigger factor from Ehrlichia canis (strain Jake).